The chain runs to 492 residues: Adenosylhomocysteinase (492 aa).

Positions 68, 153, and 215 each coordinate substrate. Residue 216-218 (TTT) coordinates NAD(+). Residues K245 and D249 each contribute to the substrate site. Residues N250, 279–284 (GYGDVG), E302, N337, 358–360 (IGH), and N406 contribute to the NAD(+) site.

This sequence belongs to the adenosylhomocysteinase family. NAD(+) serves as cofactor.

The protein resides in the cytoplasm. The catalysed reaction is S-adenosyl-L-homocysteine + H2O = L-homocysteine + adenosine. Its pathway is amino-acid biosynthesis; L-homocysteine biosynthesis; L-homocysteine from S-adenosyl-L-homocysteine: step 1/1. Functionally, may play a key role in the regulation of the intracellular concentration of adenosylhomocysteine. This is Adenosylhomocysteinase from Mycobacterium ulcerans (strain Agy99).